A 118-amino-acid polypeptide reads, in one-letter code: Cysteine--tRNA ligase (118 aa).

Position 28 (Cys-28) interacts with Zn(2+). Positions 30 to 40 (PTVYNYIHIGN) match the 'HIGH' region motif.

It belongs to the class-I aminoacyl-tRNA synthetase family. Monomer. Zn(2+) serves as cofactor.

It localises to the cytoplasm. It carries out the reaction tRNA(Cys) + L-cysteine + ATP = L-cysteinyl-tRNA(Cys) + AMP + diphosphate. The polypeptide is Cysteine--tRNA ligase (cysS) (Staphylococcus xylosus).